Consider the following 136-residue polypeptide: Probable endoribonuclease MazF7 (136 aa).

Residues 115-136 (TGPERGEAATHSPVRWTGGRDP) form a disordered region.

It belongs to the PemK/MazF family. Forms a complex with cognate antitoxin MazE7.

Its function is as follows. Toxic component of a type II toxin-antitoxin (TA) system. Upon expression in E.coli and M.smegmatis inhibits cell growth and colony formation. Its toxic effect is neutralized by coexpression with cognate antitoxin MazE7. Probably an endoribonuclease. The polypeptide is Probable endoribonuclease MazF7 (mazF7) (Mycobacterium tuberculosis (strain ATCC 25618 / H37Rv)).